Reading from the N-terminus, the 140-residue chain is Small ribosomal subunit protein uS19 (140 aa).

Positions 120–140 are disordered; sequence RPKHSAPGIGATRSSAHVSKK. The segment covering 131–140 has biased composition (polar residues); the sequence is TRSSAHVSKK.

It belongs to the universal ribosomal protein uS19 family.

Its function is as follows. Protein S19 forms a complex with S13 that binds strongly to the 16S ribosomal RNA. This Nanoarchaeum equitans (strain Kin4-M) protein is Small ribosomal subunit protein uS19.